The chain runs to 98 residues: Large ribosomal subunit protein eL21 (98 aa).

The protein belongs to the eukaryotic ribosomal protein eL21 family.

The polypeptide is Large ribosomal subunit protein eL21 (Methanocorpusculum labreanum (strain ATCC 43576 / DSM 4855 / Z)).